We begin with the raw amino-acid sequence, 1837 residues long: AF4/FMR2 family member lilli (1837 aa).

Disordered stretches follow at residues 1–25 (MAQQ…QQQQ), 65–109 (NLYS…PRRL), 162–295 (IQQQ…LHNG), 455–592 (QQLP…KKKY), 605–712 (TGLL…PGNV), 797–852 (PKSQ…LQIP), 868–1250 (NNMQ…GGAK), 1267–1311 (QQQQ…GLAS), and 1344–1466 (APSS…DPML). A compositionally biased stretch (low complexity) spans 16–25 (HQQQQQQQQQ). The segment covering 84 to 109 (REKYERQQGIQSDDRETSLFSEPRRL) has biased composition (basic and acidic residues). Composition is skewed to low complexity over residues 162 to 179 (IQQQ…VASS), 187 to 200 (QTQQ…QQQQ), and 247 to 264 (NSNS…SSSS). Thr-468 carries the phosphothreonine modification. A compositionally biased stretch (basic and acidic residues) spans 475-488 (LKIEKNPILEKQDS). Over residues 490–500 (LENDLELSESE) the composition is skewed to acidic residues. Phosphoserine is present on residues Ser-497 and Ser-499. 2 stretches are compositionally biased toward low complexity: residues 509–529 (SPGS…SESS) and 542–552 (QQQQQTQQQQL). Positions 553–563 (HGHHPQSHHHQ) are enriched in basic residues. A compositionally biased stretch (low complexity) spans 564–583 (QFLQQQLQRQQQQQQQQQQL). 2 stretches are compositionally biased toward gly residues: residues 612-633 (GGLG…GNGG) and 641-673 (GSMG…GIGS). Composition is skewed to polar residues over residues 678 to 690 (NKTP…NKWN) and 698 to 711 (PTSQ…SPGN). Low complexity predominate over residues 815 to 837 (SESATSGSSSSSCSSSDSAASAS). Residues 868-880 (NNMQKSQSMSVTV) show a composition bias toward polar residues. Over residues 892–902 (PRQKKPRKKKM) the composition is skewed to basic residues. Phosphoserine occurs at positions 913 and 914. Composition is skewed to low complexity over residues 927-951 (VVAQ…ATTT) and 961-1013 (QQQQ…SSVL). The segment at residues 952–964 (KKGRGRPRKQQQQ) is a DNA-binding region (a.T hook). Phosphoserine occurs at positions 974 and 976. Over residues 1021–1033 (SQSSSNGNTPTKK) the composition is skewed to polar residues. 4 stretches are compositionally biased toward low complexity: residues 1034–1049 (MSSI…SAAA), 1056–1091 (AVAA…SSSS), 1130–1139 (GSSSPTSSSS), and 1157–1173 (ISNS…VNNN). Residues 1174 to 1184 (LQQQAMPQQSP) show a composition bias toward polar residues. Low complexity predominate over residues 1189-1212 (LSGGSQQLSSSDSSSSSSGSSSSS). A compositionally biased stretch (basic and acidic residues) spans 1217–1234 (DAKREKNRERKPKSDKNK). A compositionally biased stretch (low complexity) spans 1267–1276 (QQQQQQQQVQ). The span at 1345–1355 (PSSSNQQNGHL) shows a compositional bias: polar residues. A compositionally biased stretch (basic residues) spans 1373–1386 (KVKHEHHQLHHHSQ). 2 stretches are compositionally biased toward basic and acidic residues: residues 1393-1407 (VKPE…ETKF) and 1416-1432 (FQLK…ERDQ). A Phosphoserine modification is found at Ser-1517. A compositionally biased stretch (polar residues) spans 1550–1560 (AVQTTPPTSVT). 2 disordered regions span residues 1550–1571 (AVQT…LVSQ) and 1727–1756 (GNTP…IVPQ). Low complexity predominate over residues 1727–1747 (GNTPSSISPSNSVGSQGSGSN).

The protein belongs to the AF4 family.

The protein resides in the nucleus. Its function is as follows. Has a role in transcriptional regulation. Acts in parallel with the Ras/MAPK and the PI3K/PKB pathways in the control of cell identity and cellular growth. Essential for regulation of the cytoskeleton and cell growth but not for cell proliferation or growth rate. Required specifically for the microtubule-based basal transport of lipid droplets. Plays a partially redundant function downstream of Raf in cell fate specification in the developing eye. Pair-rule protein that regulates embryonic cellularization, gastrulation and segmentation. The chain is AF4/FMR2 family member lilli from Drosophila willistoni (Fruit fly).